The following is a 302-amino-acid chain: Dihydroorotate dehydrogenase B (NAD(+)), catalytic subunit (302 aa).

FMN contacts are provided by residues Ser20 and 44–45; that span reads KG. Residues Lys44 and 68 to 72 each bind substrate; that span reads NSVGL. Positions 98 and 125 each coordinate FMN. Asn125 provides a ligand contact to substrate. The active-site Nucleophile is Cys128. Residues Lys163 and Ile189 each contribute to the FMN site. 190 to 191 contributes to the substrate binding site; sequence NT. Residues Gly215, 241-242, and 263-264 contribute to the FMN site; these read GG and GT.

It belongs to the dihydroorotate dehydrogenase family. Type 1 subfamily. Heterotetramer of 2 PyrK and 2 PyrD type B subunits. The cofactor is FMN.

It is found in the cytoplasm. It carries out the reaction (S)-dihydroorotate + NAD(+) = orotate + NADH + H(+). It participates in pyrimidine metabolism; UMP biosynthesis via de novo pathway; orotate from (S)-dihydroorotate (NAD(+) route): step 1/1. Catalyzes the conversion of dihydroorotate to orotate with NAD(+) as electron acceptor. This chain is Dihydroorotate dehydrogenase B (NAD(+)), catalytic subunit (pyrD), found in Thermoanaerobacter sp. (strain X514).